Reading from the N-terminus, the 361-residue chain is MSGNTFGKLFTVTTFGESHGEALGAIVDGCPPGVALEASDLQHDLDRRRPGTSRHTTQRREPDQVRILSGVFEGVTTGTPIGLLIENTDQRSKDYSKIKDQFRPAHADYTYHHKYGIRDYRGGGRSSARETAMRVAAGAIARKFLASQGIRVRGYMSQLGPIDIAFKQWEAVDTNPFFCPDPDKLPELEAFMDQLRRDQDSVGARITVVADGVPVGLGEPVFDRLDADLAHALMSINAVKGVEIGDGFASVAQRGSEHRDEMTPQGFLSNHAGGVLGGISSGQPLIAHLALKPTSSITQPGRSIDVHGEAVEVVTKGRHDPCVGIRATPIAEAMMALTLMDHYLRHRAQNADVEVSTPRLG.

The segment covering 40 to 49 has biased composition (basic and acidic residues); it reads DLQHDLDRRR. Residues 40–60 form a disordered region; it reads DLQHDLDRRRPGTSRHTTQRR. Residues Arg-48 and Arg-54 each contribute to the NADP(+) site. FMN contacts are provided by residues 125 to 127, 237 to 238, Gly-277, 292 to 296, and Arg-318; these read RSS, NA, and KPTSS.

Belongs to the chorismate synthase family. In terms of assembly, homotetramer. The cofactor is FMNH2.

The enzyme catalyses 5-O-(1-carboxyvinyl)-3-phosphoshikimate = chorismate + phosphate. The protein operates within metabolic intermediate biosynthesis; chorismate biosynthesis; chorismate from D-erythrose 4-phosphate and phosphoenolpyruvate: step 7/7. Its function is as follows. Catalyzes the anti-1,4-elimination of the C-3 phosphate and the C-6 proR hydrogen from 5-enolpyruvylshikimate-3-phosphate (EPSP) to yield chorismate, which is the branch point compound that serves as the starting substrate for the three terminal pathways of aromatic amino acid biosynthesis. This reaction introduces a second double bond into the aromatic ring system. The chain is Chorismate synthase from Chromohalobacter salexigens (strain ATCC BAA-138 / DSM 3043 / CIP 106854 / NCIMB 13768 / 1H11).